A 230-amino-acid chain; its full sequence is C-methyltransferase CouO (230 aa).

The protein belongs to the methyltransferase superfamily.

Its pathway is antibiotic biosynthesis. Its function is as follows. Mediates C-methylation at the 8-position of the aminocoumarin moieties in coumermycin A1 in the biosynthetic pathway of coumermycin antibiotic. Active on both mono- and bis-amides for mono- and di-C-methylation adjacent to the phenolic hydroxyl before it is glycosylated by CouM. The protein is C-methyltransferase CouO (couO) of Streptomyces rishiriensis.